Consider the following 308-residue polypeptide: Protein UL135 (308 aa).

The N-terminal stretch at 1-22 (MVWLWLGVGLLGGTGLASLVLA) is a signal peptide. The disordered stretch occupies residues 105 to 274 (KPEFPPARFE…TEPTTLPIVS (170 aa)). The span at 126-145 (SIGRSPSHCSSSSSLSSSAS) shows a compositional bias: low complexity. 2 stretches are compositionally biased toward pro residues: residues 152-163 (QPPPSWKPPPPP) and 219-238 (PVTP…PRNP).

This sequence belongs to the HCMV UL135 family. As to quaternary structure, interacts with host components of the WAVE2 complex ABI1, NAP1 and WAVE2. Also interacts with host ABI2 and TLN1.

It is found in the host cell membrane. Its subcellular location is the host Golgi apparatus. Functionally, remodels the host actin cytoskeleton in order to impair immune recognition of infected cells. Mechanistically, interacts with members of the host WAVE2 complex and redirects the complex to the plasma membrane. In turn, the efficiency of immune synapse formation is greatly reduced. The chain is Protein UL135 (UL135) from Human cytomegalovirus (strain Merlin) (HHV-5).